Consider the following 304-residue polypeptide: N-acetyl-D-glucosamine kinase (304 aa).

ATP-binding positions include 4-11 (GFDMGGTK) and 133-140 (GVGGGLIV). Positions 157, 177, 179, and 184 each coordinate Zn(2+).

Belongs to the ROK (NagC/XylR) family. NagK subfamily.

It catalyses the reaction N-acetyl-D-glucosamine + ATP = N-acetyl-D-glucosamine 6-phosphate + ADP + H(+). It participates in cell wall biogenesis; peptidoglycan recycling. In terms of biological role, catalyzes the phosphorylation of N-acetyl-D-glucosamine (GlcNAc) derived from cell-wall degradation, yielding GlcNAc-6-P. The chain is N-acetyl-D-glucosamine kinase from Yersinia pseudotuberculosis serotype O:1b (strain IP 31758).